The primary structure comprises 92 residues: PqqA binding protein (92 aa).

The protein belongs to the PqqD family. As to quaternary structure, monomer. Interacts with PqqE.

It participates in cofactor biosynthesis; pyrroloquinoline quinone biosynthesis. In terms of biological role, functions as a PqqA binding protein and presents PqqA to PqqE, in the pyrroloquinoline quinone (PQQ) biosynthetic pathway. The polypeptide is PqqA binding protein (Pseudomonas aeruginosa (strain UCBPP-PA14)).